We begin with the raw amino-acid sequence, 243 residues long: UPF0758 protein PCC7424_2073 (243 aa).

Residues 112–235 (VEINDPVSAV…HQSLRTVTDL (124 aa)) form the MPN domain. Residues His-184, His-186, and Asp-197 each contribute to the Zn(2+) site. The JAMM motif signature appears at 184–197 (HNHPSGNVAPSQED).

Belongs to the UPF0758 family.

The polypeptide is UPF0758 protein PCC7424_2073 (Gloeothece citriformis (strain PCC 7424) (Cyanothece sp. (strain PCC 7424))).